Here is a 98-residue protein sequence, read N- to C-terminus: NADH-ubiquinone oxidoreductase chain 4L (98 aa).

3 helical membrane-spanning segments follow: residues 1–21 (MALT…GLLM), 29–49 (SLLC…LTIL), and 61–81 (IILL…LVMV).

This sequence belongs to the complex I subunit 4L family. Core subunit of respiratory chain NADH dehydrogenase (Complex I) which is composed of 45 different subunits.

It localises to the mitochondrion inner membrane. It carries out the reaction a ubiquinone + NADH + 5 H(+)(in) = a ubiquinol + NAD(+) + 4 H(+)(out). Core subunit of the mitochondrial membrane respiratory chain NADH dehydrogenase (Complex I) which catalyzes electron transfer from NADH through the respiratory chain, using ubiquinone as an electron acceptor. Part of the enzyme membrane arm which is embedded in the lipid bilayer and involved in proton translocation. This chain is NADH-ubiquinone oxidoreductase chain 4L (MT-ND4L), found in Pteropus dasymallus (Ryukyu flying fox).